Here is a 196-residue protein sequence, read N- to C-terminus: Large ribosomal subunit protein uL10 (196 aa).

The disordered stretch occupies residues 167-196 (EKKAAEGPAEAPQPATEPPAEAPEAPADAE).

The protein belongs to the universal ribosomal protein uL10 family. Part of the ribosomal stalk of the 50S ribosomal subunit. The N-terminus interacts with L11 and the large rRNA to form the base of the stalk. The C-terminus forms an elongated spine to which L12 dimers bind in a sequential fashion forming a multimeric L10(L12)X complex.

In terms of biological role, forms part of the ribosomal stalk, playing a central role in the interaction of the ribosome with GTP-bound translation factors. The sequence is that of Large ribosomal subunit protein uL10 from Mycolicibacterium paratuberculosis (strain ATCC BAA-968 / K-10) (Mycobacterium paratuberculosis).